A 101-amino-acid chain; its full sequence is Small ribosomal subunit protein uS14 (101 aa).

It belongs to the universal ribosomal protein uS14 family. Part of the 30S ribosomal subunit. Contacts proteins S3 and S10.

Its function is as follows. Binds 16S rRNA, required for the assembly of 30S particles and may also be responsible for determining the conformation of the 16S rRNA at the A site. The chain is Small ribosomal subunit protein uS14 from Pseudomonas syringae pv. syringae (strain B728a).